Reading from the N-terminus, the 151-residue chain is Transcriptional repressor NrdR (151 aa).

A zinc finger lies at 3–34 (CPFCSHPDTQVVETREAEDGGFIRRRRQCGGC). The ATP-cone domain occupies 49-139 (PAIVKKDGRR…VYRSFEDVDD (91 aa)).

The protein belongs to the NrdR family. The cofactor is Zn(2+).

Functionally, negatively regulates transcription of bacterial ribonucleotide reductase nrd genes and operons by binding to NrdR-boxes. The protein is Transcriptional repressor NrdR of Delftia acidovorans (strain DSM 14801 / SPH-1).